We begin with the raw amino-acid sequence, 1173 residues long: TBC1 domain family member 5 homolog A (1173 aa).

4 disordered regions span residues 22–203 (KKSK…YYNE), 217–324 (NNYN…RNPN), 425–446 (DQDADLQQQQQQQQQQQRKPVS), and 823–872 (IVNQ…QNKG). Low complexity-rich tracts occupy residues 26–107 (SNIN…NNVN), 127–203 (NNNI…YYNE), and 217–290 (NNYN…QQYY). The stretch at 163–214 (NENYNENYNNNNNNNNNNNNNNNNNNNNNNNNNNNNNYYNENNNQQQLQQNY) forms a coiled coil. The span at 299 to 313 (QHEEFEKEIEQKEQD) shows a compositional bias: basic and acidic residues. The span at 314–324 (SSPINVNRNPN) shows a compositional bias: polar residues. The Rab-GAP TBC domain maps to 374-729 (PKDTTVRSIF…ILWDSIFKES (356 aa)). The span at 431–441 (QQQQQQQQQQQ) shows a compositional bias: low complexity. A coiled-coil region spans residues 885 to 930 (TFKQIINDLNEYNEEFQLAKENEQLKQQKSKLQKEVDTLKETQTHV). Over residues 983–994 (NNSKNRLPNKSV) the composition is skewed to polar residues. Disordered stretches follow at residues 983–1015 (NNSKNRLPNKSVQQSTISQQSTTPQQSITQQTS) and 1054–1089 (QSTQQEQQSTQQEQQQSTQPQQSQQNNDNSPFQQYN). Composition is skewed to low complexity over residues 995 to 1015 (QQSTISQQSTTPQQSITQQTS) and 1054 to 1078 (QSTQQEQQSTQQEQQQSTQPQQSQQ). Polar residues predominate over residues 1079 to 1089 (NNDNSPFQQYN).

In terms of biological role, may act as a GTPase-activating protein for Rab family protein(s). The polypeptide is TBC1 domain family member 5 homolog A (tbc1d5A) (Dictyostelium discoideum (Social amoeba)).